The sequence spans 537 residues: MPKILEFDESARRALERGVNRLADAVKVTLGPKGRNVVIDKKWGAPTITNDGVTVAREVELEDPYENLGAQLVKEVATKTNDAAGDGTTTATVLAQALVNEGLRSVAAGASPILLKRGIDAAAQAVSETLLSRAREIDERGDIAYVATNSAQDKQIGELIAEAFDKVGKDGVITVEESQTFGMDLEFTEGLQFDKGYISPYFVTDPDRQEAVLEDALILIHQGKISNLAELLPLLEKIVQTKKPLLIIAEDVEGDALGALVLNKMRGTLSVAAVKAPGFGERRKAMLQDIAILTGGQVIAEEVGLTLENAELDVLGKARRITVTKDTTTIVDGAGDQSEVNDRINQIRKEIEATDSDWDREKLQERLAKLAGGVCVLRVGAATEVELKERKHRLEDAISATRAAVEEGIIAGGGSALVHAAKTLEGDLGRTGDEATGVAIVRRALVAPARWIANNAGAEGNVVVSRIAELEPGHGYNAATGEYGDLVAQGIIDPVKVTRSAVQNAASIAGMLLTTEALVVEKPEEEENAEGGHGHSH.

ATP is bound by residues 29–32, 86–90, G413, 477–479, and D493; these read TLGP, DGTTT, and NAA.

The protein belongs to the chaperonin (HSP60) family. Forms a cylinder of 14 subunits composed of two heptameric rings stacked back-to-back. Interacts with the co-chaperonin GroES.

It is found in the cytoplasm. The enzyme catalyses ATP + H2O + a folded polypeptide = ADP + phosphate + an unfolded polypeptide.. In terms of biological role, together with its co-chaperonin GroES, plays an essential role in assisting protein folding. The GroEL-GroES system forms a nano-cage that allows encapsulation of the non-native substrate proteins and provides a physical environment optimized to promote and accelerate protein folding. This chain is Chaperonin GroEL 2, found in Thermobifida fusca (strain YX).